The primary structure comprises 478 residues: MKHAIKHIHFIGLGGAGMSGIAEVLHNLGYVISGSDLSDSATLQRLAGLGIQTFVGHAAANLVDVDAVVTSTAVHADNPEVLAAREKHIPVVPRALMLAELMRFKQGIAIAGTHGKTTTTSLVASVLAEGGLDPTFVIGGRLNSAGANAKLGSGDYIVVEADESDASFLNLLPVMAVVTNIDADHMETYGHDFGNLKKAFVDFLRRMPFYGTAILCTDDPVVRQIVPEMSCPITSYGLNEEAQVRAINVRAVGAQMHFTAQRRNGVKLPDLDVVLNLAGQHNVLNALAAIAVAVELNVPDAAVQKALSDFTGVGRRFQSYGELPARDGGRFTVIEDYGHHPVEVAATLSAARGAFPGRRLVLAFQPHRYSRTRDCFEDFVKVISSHADAVLLAEVYAAGETPIVAADGRSLARALRVAGKVEPVFVDSIHDMPQAIVDAAQDGDIVMCMGAGSIGLVPAKVVAMLQFQEVNVLEGQCA.

112-118 (GTHGKTT) provides a ligand contact to ATP.

The protein belongs to the MurCDEF family.

It is found in the cytoplasm. The catalysed reaction is UDP-N-acetyl-alpha-D-muramate + L-alanine + ATP = UDP-N-acetyl-alpha-D-muramoyl-L-alanine + ADP + phosphate + H(+). It participates in cell wall biogenesis; peptidoglycan biosynthesis. In terms of biological role, cell wall formation. The chain is UDP-N-acetylmuramate--L-alanine ligase from Polaromonas naphthalenivorans (strain CJ2).